Here is a 433-residue protein sequence, read N- to C-terminus: Glutamate-1-semialdehyde 2,1-aminomutase (433 aa).

Lys273 is modified (N6-(pyridoxal phosphate)lysine).

This sequence belongs to the class-III pyridoxal-phosphate-dependent aminotransferase family. HemL subfamily. Homodimer. The cofactor is pyridoxal 5'-phosphate.

It localises to the cytoplasm. The enzyme catalyses (S)-4-amino-5-oxopentanoate = 5-aminolevulinate. Its pathway is porphyrin-containing compound metabolism; protoporphyrin-IX biosynthesis; 5-aminolevulinate from L-glutamyl-tRNA(Glu): step 2/2. The protein operates within porphyrin-containing compound metabolism; chlorophyll biosynthesis. This Microcystis aeruginosa (strain NIES-843 / IAM M-2473) protein is Glutamate-1-semialdehyde 2,1-aminomutase.